The sequence spans 342 residues: Galactose mutarotase (342 aa).

N-acetylalanine is present on Ala2. Ser14 is subject to Phosphoserine. Residues 81–82 (NR) and His107 each bind beta-D-galactose. Ser124 bears the Phosphoserine mark. His176 functions as the Proton donor in the catalytic mechanism. Beta-D-galactose is bound by residues 176-178 (HSY), Asp243, Gln279, and Glu307. Catalysis depends on Glu307, which acts as the Proton acceptor.

Belongs to the aldose epimerase family. As to quaternary structure, monomer.

The protein resides in the cytoplasm. It carries out the reaction alpha-D-galactose = beta-D-galactose. The catalysed reaction is alpha-D-glucose = beta-D-glucose. Its pathway is carbohydrate metabolism; hexose metabolism. It functions in the pathway carbohydrate metabolism; galactose metabolism. Mutarotase that catalyzes the interconversion of beta-D-galactose and alpha-D-galactose during galactose metabolism. Beta-D-galactose is metabolized in the liver into glucose 1-phosphate, the primary metabolic fuel, by the action of four enzymes that constitute the Leloir pathway: GALM, GALK1 (galactokinase), GALT (galactose-1-phosphate uridylyltransferase) and GALE (UDP-galactose-4'-epimerase). Involved in the maintenance of the equilibrium between the beta- and alpha-anomers of galactose, therefore ensuring a sufficient supply of the alpha-anomer for GALK1. Also active on D-glucose although shows a preference for galactose over glucose. This Pongo abelii (Sumatran orangutan) protein is Galactose mutarotase (GALM).